The chain runs to 101 residues: Protein RnfH (101 aa).

The protein belongs to the UPF0125 (RnfH) family.

The polypeptide is Protein RnfH (Pseudomonas aeruginosa (strain LESB58)).